We begin with the raw amino-acid sequence, 338 residues long: Ketol-acid reductoisomerase (NADP(+)) (338 aa).

Positions 1–181 constitute a KARI N-terminal Rossmann domain; sequence MKVYYDKDCD…GGGRTGIIET (181 aa). NADP(+) contacts are provided by residues 24–27, Arg-47, Ser-50, Ser-52, and 82–85; these read YGSQ and DEFQ. Residue His-107 is part of the active site. Gly-133 lines the NADP(+) pocket. Residues 182 to 327 enclose the KARI C-terminal knotted domain; that stretch reads TFKDETETDL…EKLRTMMPWI (146 aa). Asp-190, Glu-194, Glu-226, and Glu-230 together coordinate Mg(2+). Position 251 (Ser-251) interacts with substrate.

This sequence belongs to the ketol-acid reductoisomerase family. The cofactor is Mg(2+).

The enzyme catalyses (2R)-2,3-dihydroxy-3-methylbutanoate + NADP(+) = (2S)-2-acetolactate + NADPH + H(+). It catalyses the reaction (2R,3R)-2,3-dihydroxy-3-methylpentanoate + NADP(+) = (S)-2-ethyl-2-hydroxy-3-oxobutanoate + NADPH + H(+). Its pathway is amino-acid biosynthesis; L-isoleucine biosynthesis; L-isoleucine from 2-oxobutanoate: step 2/4. The protein operates within amino-acid biosynthesis; L-valine biosynthesis; L-valine from pyruvate: step 2/4. Involved in the biosynthesis of branched-chain amino acids (BCAA). Catalyzes an alkyl-migration followed by a ketol-acid reduction of (S)-2-acetolactate (S2AL) to yield (R)-2,3-dihydroxy-isovalerate. In the isomerase reaction, S2AL is rearranged via a Mg-dependent methyl migration to produce 3-hydroxy-3-methyl-2-ketobutyrate (HMKB). In the reductase reaction, this 2-ketoacid undergoes a metal-dependent reduction by NADPH to yield (R)-2,3-dihydroxy-isovalerate. The sequence is that of Ketol-acid reductoisomerase (NADP(+)) from Azotobacter vinelandii (strain DJ / ATCC BAA-1303).